Here is an 804-residue protein sequence, read N- to C-terminus: Leucine--tRNA ligase (804 aa).

The 'HIGH' region motif lies at 39–50 (PYPSGKGLHVGH). Positions 573 to 577 (KMSKS) match the 'KMSKS' region motif. Position 576 (K576) interacts with ATP.

The protein belongs to the class-I aminoacyl-tRNA synthetase family.

Its subcellular location is the cytoplasm. It catalyses the reaction tRNA(Leu) + L-leucine + ATP = L-leucyl-tRNA(Leu) + AMP + diphosphate. This is Leucine--tRNA ligase from Lactobacillus delbrueckii subsp. bulgaricus (strain ATCC BAA-365 / Lb-18).